Reading from the N-terminus, the 371-residue chain is uncharacterized protein (371 aa).

A run of 7 helical transmembrane segments spans residues 9–29 (FTLDNIIQIGISLAILLVFLI), 58–78 (VLAFDKPARWFFVALGLFLAI), 98–118 (LIVALLCWGLCNLTATSSFIF), 133–153 (LAPFLSKLLRFVIIALSVSVI), 159–179 (YDVNGFVAGLGLGGLAFALAA), 183–203 (ISNFFGGIIIITEKPFTIGDW), and 330–350 (IIEILGAEGVQFAYPGQMVVV).

The protein belongs to the MscS (TC 1.A.23) family.

It is found in the cell membrane. In terms of biological role, may play a role in resistance to osmotic downshock. This is an uncharacterized protein from Bacillus subtilis (strain 168).